A 159-amino-acid polypeptide reads, in one-letter code: 2-C-methyl-D-erythritol 2,4-cyclodiphosphate synthase (159 aa).

A divalent metal cation-binding residues include Asp9 and His11. 4-CDP-2-C-methyl-D-erythritol 2-phosphate is bound by residues 9 to 11 (DVH) and 35 to 36 (HS). A divalent metal cation is bound at residue His43. 4-CDP-2-C-methyl-D-erythritol 2-phosphate contacts are provided by residues 57-59 (DLG), 62-66 (FPDTD), 133-136 (TTTE), Phe140, and Arg143.

It belongs to the IspF family. As to quaternary structure, homotrimer. Requires a divalent metal cation as cofactor.

The enzyme catalyses 4-CDP-2-C-methyl-D-erythritol 2-phosphate = 2-C-methyl-D-erythritol 2,4-cyclic diphosphate + CMP. It functions in the pathway isoprenoid biosynthesis; isopentenyl diphosphate biosynthesis via DXP pathway; isopentenyl diphosphate from 1-deoxy-D-xylulose 5-phosphate: step 4/6. Its function is as follows. Involved in the biosynthesis of isopentenyl diphosphate (IPP) and dimethylallyl diphosphate (DMAPP), two major building blocks of isoprenoid compounds. Catalyzes the conversion of 4-diphosphocytidyl-2-C-methyl-D-erythritol 2-phosphate (CDP-ME2P) to 2-C-methyl-D-erythritol 2,4-cyclodiphosphate (ME-CPP) with a corresponding release of cytidine 5-monophosphate (CMP). The protein is 2-C-methyl-D-erythritol 2,4-cyclodiphosphate synthase of Shouchella clausii (strain KSM-K16) (Alkalihalobacillus clausii).